Consider the following 223-residue polypeptide: Ubiquinone biosynthesis protein COQ4 homolog 2, mitochondrial (223 aa).

Residues 1 to 26 constitute a mitochondrion transit peptide; the sequence is MFLRRVHPVRLGHAIQRSLTTTKSRN. Residues 21 to 32 show a composition bias toward low complexity; that stretch reads TTKSRNESTTTT. Residues 21–43 are disordered; the sequence is TTKSRNESTTTTVEAPQAVPSPP. Zn(2+)-binding residues include His177, Asp178, His181, and Glu193.

The protein belongs to the COQ4 family. As to quaternary structure, component of a multi-subunit COQ enzyme complex. Requires Zn(2+) as cofactor.

It is found in the mitochondrion inner membrane. The enzyme catalyses a 4-hydroxy-3-methoxy-5-(all-trans-polyprenyl)benzoate + H(+) = a 2-methoxy-6-(all-trans-polyprenyl)phenol + CO2. It functions in the pathway cofactor biosynthesis; ubiquinone biosynthesis. Lyase that catalyzes the C1-decarboxylation of 4-hydroxy-3-methoxy-5-(all-trans-polyprenyl)benzoic acid into 2-methoxy-6-(all-trans-polyprenyl)phenol during ubiquinone biosynthesis. This Culex quinquefasciatus (Southern house mosquito) protein is Ubiquinone biosynthesis protein COQ4 homolog 2, mitochondrial.